The sequence spans 344 residues: Ketol-acid reductoisomerase (NADP(+)) (344 aa).

In terms of domain architecture, KARI N-terminal Rossmann spans 2 to 181 (EKIYYDADIS…GAGRAGILTT (180 aa)). NADP(+)-binding positions include 25–28 (YGSQ), R48, S52, and 82–85 (DERQ). H107 is an active-site residue. An NADP(+)-binding site is contributed by G133. Residues 182–327 (TFREETETDL…RKLRSMMPFI (146 aa)) enclose the KARI C-terminal knotted domain. The Mg(2+) site is built by D190, E194, E226, and E230. S251 serves as a coordination point for substrate.

Belongs to the ketol-acid reductoisomerase family. Mg(2+) is required as a cofactor.

The catalysed reaction is (2R)-2,3-dihydroxy-3-methylbutanoate + NADP(+) = (2S)-2-acetolactate + NADPH + H(+). The enzyme catalyses (2R,3R)-2,3-dihydroxy-3-methylpentanoate + NADP(+) = (S)-2-ethyl-2-hydroxy-3-oxobutanoate + NADPH + H(+). It participates in amino-acid biosynthesis; L-isoleucine biosynthesis; L-isoleucine from 2-oxobutanoate: step 2/4. Its pathway is amino-acid biosynthesis; L-valine biosynthesis; L-valine from pyruvate: step 2/4. Involved in the biosynthesis of branched-chain amino acids (BCAA). Catalyzes an alkyl-migration followed by a ketol-acid reduction of (S)-2-acetolactate (S2AL) to yield (R)-2,3-dihydroxy-isovalerate. In the isomerase reaction, S2AL is rearranged via a Mg-dependent methyl migration to produce 3-hydroxy-3-methyl-2-ketobutyrate (HMKB). In the reductase reaction, this 2-ketoacid undergoes a metal-dependent reduction by NADPH to yield (R)-2,3-dihydroxy-isovalerate. This Alicyclobacillus acidocaldarius subsp. acidocaldarius (strain ATCC 27009 / DSM 446 / BCRC 14685 / JCM 5260 / KCTC 1825 / NBRC 15652 / NCIMB 11725 / NRRL B-14509 / 104-IA) (Bacillus acidocaldarius) protein is Ketol-acid reductoisomerase (NADP(+)).